The primary structure comprises 166 residues: Small ribosomal subunit protein uS5 (166 aa).

Residues 11–74 (LQEKLVQVNR…EAARKNMVDV (64 aa)) form the S5 DRBM domain.

The protein belongs to the universal ribosomal protein uS5 family. In terms of assembly, part of the 30S ribosomal subunit. Contacts proteins S4 and S8.

With S4 and S12 plays an important role in translational accuracy. Functionally, located at the back of the 30S subunit body where it stabilizes the conformation of the head with respect to the body. In Marinobacter nauticus (strain ATCC 700491 / DSM 11845 / VT8) (Marinobacter aquaeolei), this protein is Small ribosomal subunit protein uS5.